A 355-amino-acid chain; its full sequence is DNA polymerase IV (355 aa).

A UmuC domain is found at 7 to 188 (IIHIDMDCFY…LPVRKLFGVG (182 aa)). Residues Asp11 and Asp106 each coordinate Mg(2+). Residue Glu107 is part of the active site.

Belongs to the DNA polymerase type-Y family. As to quaternary structure, monomer. The cofactor is Mg(2+).

Its subcellular location is the cytoplasm. The catalysed reaction is DNA(n) + a 2'-deoxyribonucleoside 5'-triphosphate = DNA(n+1) + diphosphate. Its function is as follows. Poorly processive, error-prone DNA polymerase involved in untargeted mutagenesis. Copies undamaged DNA at stalled replication forks, which arise in vivo from mismatched or misaligned primer ends. These misaligned primers can be extended by PolIV. Exhibits no 3'-5' exonuclease (proofreading) activity. May be involved in translesional synthesis, in conjunction with the beta clamp from PolIII. This is DNA polymerase IV from Legionella pneumophila (strain Lens).